A 102-amino-acid chain; its full sequence is MSHTILLVQQQVKKPESRVWADYETLNQCLEGVCKIYEEQLKQQNPTAPTITYDISQLFKFIDQLADLSCLEFHPATGTYVPHTKDWIKENIYALLRNQAGQ.

It belongs to the E(R) family. As to quaternary structure, homodimer.

Its function is as follows. May have a role in the cell cycle. In Taenia solium (Pork tapeworm), this protein is Enhancer of rudimentary homolog (ERH).